A 212-amino-acid polypeptide reads, in one-letter code: Leucyl/phenylalanyl-tRNA--protein transferase (212 aa).

This sequence belongs to the L/F-transferase family.

The protein localises to the cytoplasm. The enzyme catalyses N-terminal L-lysyl-[protein] + L-leucyl-tRNA(Leu) = N-terminal L-leucyl-L-lysyl-[protein] + tRNA(Leu) + H(+). It carries out the reaction N-terminal L-arginyl-[protein] + L-leucyl-tRNA(Leu) = N-terminal L-leucyl-L-arginyl-[protein] + tRNA(Leu) + H(+). It catalyses the reaction L-phenylalanyl-tRNA(Phe) + an N-terminal L-alpha-aminoacyl-[protein] = an N-terminal L-phenylalanyl-L-alpha-aminoacyl-[protein] + tRNA(Phe). In terms of biological role, functions in the N-end rule pathway of protein degradation where it conjugates Leu, Phe and, less efficiently, Met from aminoacyl-tRNAs to the N-termini of proteins containing an N-terminal arginine or lysine. The polypeptide is Leucyl/phenylalanyl-tRNA--protein transferase (Allorhizobium ampelinum (strain ATCC BAA-846 / DSM 112012 / S4) (Agrobacterium vitis (strain S4))).